We begin with the raw amino-acid sequence, 513 residues long: Cytochrome P450 1A2 (513 aa).

A glycan (O-linked (GlcNAc) serine) is linked at serine 68. Substrate is bound at residue phenylalanine 225. Cysteine 456 serves as a coordination point for heme.

Belongs to the cytochrome P450 family. In terms of assembly, interacts with PGRMC1; the interaction requires PGRMC1 homodimerization. Requires heme as cofactor. Found in lung and liver.

It localises to the endoplasmic reticulum membrane. It is found in the microsome membrane. The enzyme catalyses an organic molecule + reduced [NADPH--hemoprotein reductase] + O2 = an alcohol + oxidized [NADPH--hemoprotein reductase] + H2O + H(+). The catalysed reaction is 17beta-estradiol + reduced [NADPH--hemoprotein reductase] + O2 = 2-hydroxy-17beta-estradiol + oxidized [NADPH--hemoprotein reductase] + H2O + H(+). It catalyses the reaction 17beta-estradiol + reduced [NADPH--hemoprotein reductase] + O2 = 4-hydroxy-17beta-estradiol + oxidized [NADPH--hemoprotein reductase] + H2O + H(+). It carries out the reaction estrone + reduced [NADPH--hemoprotein reductase] + O2 = 2-hydroxyestrone + oxidized [NADPH--hemoprotein reductase] + H2O + H(+). The enzyme catalyses estrone + reduced [NADPH--hemoprotein reductase] + O2 = 4-hydroxyestrone + oxidized [NADPH--hemoprotein reductase] + H2O + H(+). The catalysed reaction is cholesterol + reduced [NADPH--hemoprotein reductase] + O2 = 25-hydroxycholesterol + oxidized [NADPH--hemoprotein reductase] + H2O + H(+). It catalyses the reaction all-trans-retinol + reduced [NADPH--hemoprotein reductase] + O2 = all-trans-retinal + oxidized [NADPH--hemoprotein reductase] + 2 H2O + H(+). It carries out the reaction all-trans-retinal + reduced [NADPH--hemoprotein reductase] + O2 = all-trans-retinoate + oxidized [NADPH--hemoprotein reductase] + H2O + 2 H(+). The enzyme catalyses (5Z,8Z,11Z,14Z)-eicosatetraenoate + reduced [NADPH--hemoprotein reductase] + O2 = (14R,15S)-epoxy-(5Z,8Z,11Z)-eicosatrienoate + oxidized [NADPH--hemoprotein reductase] + H2O + H(+). The catalysed reaction is (5Z,8Z,11Z,14Z)-eicosatetraenoate + reduced [NADPH--hemoprotein reductase] + O2 = (14S,15R)-epoxy-(5Z,8Z,11Z)-eicosatrienoate + oxidized [NADPH--hemoprotein reductase] + H2O + H(+). It catalyses the reaction (5Z,8Z,11Z,14Z,17Z)-eicosapentaenoate + reduced [NADPH--hemoprotein reductase] + O2 = (17R,18S)-epoxy-(5Z,8Z,11Z,14Z)-eicosatetraenoate + oxidized [NADPH--hemoprotein reductase] + H2O + H(+). It carries out the reaction (4Z,7Z,10Z,13Z,16Z,19Z)-docosahexaenoate + reduced [NADPH--hemoprotein reductase] + O2 = (19R,20S)-epoxy-(4Z,7Z,10Z,13Z,16Z)-docosapentaenoate + oxidized [NADPH--hemoprotein reductase] + H2O + H(+). The enzyme catalyses (5S)-hydroperoxy-(6E,8Z,11Z,14Z)-eicosatetraenoate = 5-oxo-(6E,8Z,11Z,14Z)-eicosatetraenoate + H2O. The catalysed reaction is (12S)-hydroperoxy-(5Z,8Z,10E,14Z)-eicosatetraenoate = 12-oxo-(5Z,8Z,10E,14Z)-eicosatetraenoate + H2O. It catalyses the reaction (15S)-hydroperoxy-(5Z,8Z,11Z,13E)-eicosatetraenoate = 15-oxo-(5Z,8Z,11Z,13E)-eicosatetraenoate + H2O. It carries out the reaction (13S)-hydroperoxy-(9Z,11E)-octadecadienoate = 13-oxo-(9Z,11E)-octadecadienoate + H2O. The enzyme catalyses (5Z,8Z,11Z,14Z)-eicosatetraenoate + reduced [NADPH--hemoprotein reductase] + O2 = 13-hydroxy-(5Z,8Z,11Z,14Z)-eicosatetraenoate + oxidized [NADPH--hemoprotein reductase] + H2O + H(+). The catalysed reaction is (5Z,8Z,11Z,14Z)-eicosatetraenoate + reduced [NADPH--hemoprotein reductase] + O2 = 19-hydroxy-(5Z,8Z,11Z,14Z)-eicosatetraenoate + oxidized [NADPH--hemoprotein reductase] + H2O + H(+). It catalyses the reaction (9Z,12Z)-octadecadienoate + reduced [NADPH--hemoprotein reductase] + O2 = 11-hydroxy-(9Z,12Z)-octadecadienoate + oxidized [NADPH--hemoprotein reductase] + H2O + H(+). Its pathway is cofactor metabolism; retinol metabolism. The protein operates within steroid metabolism; cholesterol metabolism. It functions in the pathway lipid metabolism; arachidonate metabolism. Its function is as follows. A cytochrome P450 monooxygenase involved in the metabolism of various endogenous substrates, including fatty acids, steroid hormones and vitamins. Mechanistically, uses molecular oxygen inserting one oxygen atom into a substrate, and reducing the second into a water molecule, with two electrons provided by NADPH via cytochrome P450 reductase (NADPH--hemoprotein reductase). Catalyzes the hydroxylation of carbon-hydrogen bonds. Exhibits high catalytic activity for the formation of hydroxyestrogens from estrone (E1) and 17beta-estradiol (E2), namely 2-hydroxy E1 and E2. Metabolizes cholesterol toward 25-hydroxycholesterol, a physiological regulator of cellular cholesterol homeostasis. May act as a major enzyme for all-trans retinoic acid biosynthesis in the liver. Catalyzes two successive oxidative transformation of all-trans retinol to all-trans retinal and then to the active form all-trans retinoic acid. Primarily catalyzes stereoselective epoxidation of the last double bond of polyunsaturated fatty acids (PUFA), displaying a strong preference for the (R,S) stereoisomer. Catalyzes bisallylic hydroxylation and omega-1 hydroxylation of PUFA. May also participate in eicosanoids metabolism by converting hydroperoxide species into oxo metabolites (lipoxygenase-like reaction, NADPH-independent). Plays a role in the oxidative metabolism of xenobiotics. Catalyzes the N-hydroxylation of heterocyclic amines and the O-deethylation of phenacetin. Metabolizes caffeine via N3-demethylation. The protein is Cytochrome P450 1A2 (CYP1A2) of Mesocricetus auratus (Golden hamster).